Consider the following 251-residue polypeptide: Chromobox protein homolog 7 (251 aa).

A Chromo domain is found at 11–69 (FAVESIRKKRVRKGKVEYLVKWKGWPPKYSTWEPEEHILDPRLVMAYEEKEERDRASGY). Residues 190 to 220 (EPAAQPPEEEADADLAEGPPPWTPALPSSEV) are disordered. A required for cellular lifespan extension region spans residues 223–236 (TDITANSITVTFRE).

Component of a PRC1-like complex. Interacts with RING1 and RNF2/RING1B, but not with BMI1, EED or EZH2. Interacts with PCGF1, PCGF2, PCGF3, PCGF5 and PCGF6.

The protein localises to the nucleus. Component of a Polycomb group (PcG) multiprotein PRC1-like complex, a complex class required to maintain the transcriptionally repressive state of many genes, including Hox genes, throughout development. PcG PRC1 complex acts via chromatin remodeling and modification of histones; it mediates monoubiquitination of histone H2A 'Lys-119', rendering chromatin heritably changed in its expressibility. Promotes histone H3 trimethylation at 'Lys-9' (H3K9me3). Binds to trimethylated lysine residues in histones, and possibly also other proteins. Regulator of cellular lifespan by maintaining the repression of CDKN2A, but not by inducing telomerase activity. The sequence is that of Chromobox protein homolog 7 (CBX7) from Homo sapiens (Human).